Reading from the N-terminus, the 134-residue chain is Protein YhfA (134 aa).

The protein is Protein YhfA (yhfA) of Escherichia coli O157:H7.